A 459-amino-acid polypeptide reads, in one-letter code: Zinc finger and BTB domain-containing protein 9 (459 aa).

The 65-residue stretch at 48 to 112 folds into the BTB domain; it reads CDVSLLVQGR…IYSGSLHLPL (65 aa). Residues 178 to 189 are compositionally biased toward polar residues; that stretch reads VRSSASTENSVL. Disordered regions lie at residues 178-200 and 212-274; these read VRSS…EGSE and EEEE…ASQI. Residues Lys285, Lys293, and Lys368 each participate in a glycyl lysine isopeptide (Lys-Gly) (interchain with G-Cter in SUMO2) cross-link. Residues 293–356 are disordered; the sequence is KEKTKVLSGE…GGTGQAMHGP (64 aa). The C2H2-type 1 zinc-finger motif lies at 397–419; the sequence is FGCGICNKRFKLKHHLTEHMKTH. The segment at 424 to 446 adopts a C2H2-type 2; atypical zinc-finger fold; it reads HACPHCGRRFRVQAFFLRHRDLC.

Its subcellular location is the nucleus. Its function is as follows. May be involved in transcriptional regulation. The chain is Zinc finger and BTB domain-containing protein 9 (Zbtb9) from Mus musculus (Mouse).